A 453-amino-acid polypeptide reads, in one-letter code: UDP-glucose 6-dehydrogenase (453 aa).

NAD(+) contacts are provided by residues 2–19 (RLCV…AACF), Val-11, Thr-121, and Glu-158. Substrate is bound by residues 154–158 (EFLKE), Lys-210, Asn-214, 255–259 (FIYAG), and Gly-263. Residue Cys-266 is the Nucleophile of the active site. Lys-269 lines the NAD(+) pocket. Lys-327 contributes to the substrate binding site. Arg-334 is an NAD(+) binding site.

It belongs to the UDP-glucose/GDP-mannose dehydrogenase family.

The enzyme catalyses UDP-alpha-D-glucose + 2 NAD(+) + H2O = UDP-alpha-D-glucuronate + 2 NADH + 3 H(+). It functions in the pathway nucleotide-sugar biosynthesis; UDP-alpha-D-glucuronate biosynthesis; UDP-alpha-D-glucuronate from UDP-alpha-D-glucose: step 1/1. The protein operates within bacterial outer membrane biogenesis; lipopolysaccharide biosynthesis. This is UDP-glucose 6-dehydrogenase (udg) from Pseudomonas aeruginosa (strain ATCC 15692 / DSM 22644 / CIP 104116 / JCM 14847 / LMG 12228 / 1C / PRS 101 / PAO1).